We begin with the raw amino-acid sequence, 162 residues long: tRNA-specific adenosine deaminase (162 aa).

Residues 3–115 (DSDKYFMKCA…KNLQKYICCK (113 aa)) form the CMP/dCMP-type deaminase domain. Histidine 54 provides a ligand contact to Zn(2+). Glutamate 56 serves as the catalytic Proton donor. Cysteine 84 and cysteine 87 together coordinate Zn(2+).

Belongs to the cytidine and deoxycytidylate deaminase family. In terms of assembly, homodimer. Requires Zn(2+) as cofactor.

It carries out the reaction adenosine(34) in tRNA + H2O + H(+) = inosine(34) in tRNA + NH4(+). In terms of biological role, catalyzes the deamination of adenosine to inosine at the wobble position 34 of tRNA(Arg2). This is tRNA-specific adenosine deaminase from Buchnera aphidicola subsp. Baizongia pistaciae (strain Bp).